We begin with the raw amino-acid sequence, 502 residues long: Lysine--tRNA ligase (502 aa).

Mg(2+)-binding residues include Glu398 and Glu405.

This sequence belongs to the class-II aminoacyl-tRNA synthetase family. As to quaternary structure, homodimer. The cofactor is Mg(2+).

The protein resides in the cytoplasm. The catalysed reaction is tRNA(Lys) + L-lysine + ATP = L-lysyl-tRNA(Lys) + AMP + diphosphate. This Thermosipho africanus (strain TCF52B) protein is Lysine--tRNA ligase.